Here is a 397-residue protein sequence, read N- to C-terminus: Metal tolerance protein 4 (397 aa).

Residues 1–19 (MEAKGENDARAPLLAERRR) show a composition bias toward basic and acidic residues. Positions 1–27 (MEAKGENDARAPLLAERRRNSVGSMRG) are disordered. At 1–104 (MEAKGENDAR…EQKQSEFAMK (104 aa)) the chain is on the cytoplasmic side. Residues 105–122 (ISNYANMILLALKIYATI) traverse the membrane as a helical segment. Residues 123 to 126 (KSGS) lie on the Vacuolar side of the membrane. The chain crosses the membrane as a helical span at residues 127–147 (IAIAASTLDSLLDLMAGGILW). At 148–170 (FTHLSMKSINVYKYPIGKLRVQP) the chain is on the cytoplasmic side. A helical transmembrane segment spans residues 171-191 (VGIIIFAAVMATLGFQVFVQA). Residues 192-208 (VEKLIVNETPDKLTPVQ) lie on the Vacuolar side of the membrane. Residues 209–229 (LTWLYSIMIFATVVKLALWLY) traverse the membrane as a helical segment. The Cytoplasmic portion of the chain corresponds to 230-248 (CRTSGNKIVRAYAKDHYFD). The chain crosses the membrane as a helical span at residues 249–269 (VVTNVVGLAAAVLGDMFYWWI). A topological domain (vacuolar) is located at residue D270. The helical transmembrane segment at 271 to 291 (PVGAIALAVYTITNWSGTVWE) threads the bilayer. The Cytoplasmic segment spans residues 292–397 (NAVSLVGESA…ILSKLPSSQP (106 aa)).

It belongs to the cation diffusion facilitator (CDF) transporter (TC 2.A.4) family. SLC30A subfamily.

It is found in the vacuole membrane. Involved in sequestration of excess metal in the cytoplasm into vacuoles to maintain metal homeostasis. This is Metal tolerance protein 4 (MTP4) from Oryza sativa subsp. japonica (Rice).